Here is a 324-residue protein sequence, read N- to C-terminus: Acetyl-coenzyme A carboxylase carboxyl transferase subunit alpha (324 aa).

Positions glutamine 44–glutamate 298 constitute a CoA carboxyltransferase C-terminal domain.

The protein belongs to the AccA family. Acetyl-CoA carboxylase is a heterohexamer composed of biotin carboxyl carrier protein (AccB), biotin carboxylase (AccC) and two subunits each of ACCase subunit alpha (AccA) and ACCase subunit beta (AccD).

The protein resides in the cytoplasm. The enzyme catalyses N(6)-carboxybiotinyl-L-lysyl-[protein] + acetyl-CoA = N(6)-biotinyl-L-lysyl-[protein] + malonyl-CoA. It functions in the pathway lipid metabolism; malonyl-CoA biosynthesis; malonyl-CoA from acetyl-CoA: step 1/1. Functionally, component of the acetyl coenzyme A carboxylase (ACC) complex. First, biotin carboxylase catalyzes the carboxylation of biotin on its carrier protein (BCCP) and then the CO(2) group is transferred by the carboxyltransferase to acetyl-CoA to form malonyl-CoA. This Rippkaea orientalis (strain PCC 8801 / RF-1) (Cyanothece sp. (strain PCC 8801)) protein is Acetyl-coenzyme A carboxylase carboxyl transferase subunit alpha.